We begin with the raw amino-acid sequence, 196 residues long: Cysteine/O-acetylserine efflux protein (196 aa).

The chain crosses the membrane as a helical span at residues 1-21 (MTPTLISAFLTYTLITALTPG). The Cytoplasmic segment spans residues 22–41 (PNNILALSSVTSHGLRRSLR). Residues 42-62 (VLAGMSVGFIITMLICAALTF) form a helical membrane-spanning segment. Over 63 to 70 (SLVELDSR) the chain is Periplasmic. A helical transmembrane segment spans residues 71 to 91 (FTLVLGWIGAAYILWLAWQIA). The Cytoplasmic portion of the chain corresponds to 92–114 (KSKPATGTPSVEPVGFWASLGLQ). The chain crosses the membrane as a helical span at residues 115–135 (FVNVKIILYGITALSTFVLPV). The Periplasmic segment spans residues 136–139 (TREP). Residues 140–160 (VWLISVSLLLAAIGALGNLCW) traverse the membrane as a helical segment. Over 161-170 (ALAGHLFQRL) the chain is Cytoplasmic. The chain crosses the membrane as a helical span at residues 171-191 (FLLYGRQLNWMLAALLVYCAV). At 192–196 (RIVVE) the chain is on the periplasmic side.

Belongs to the Rht family.

It is found in the cell inner membrane. It catalyses the reaction O-acetyl-L-serine(in) = O-acetyl-L-serine(out). It carries out the reaction L-cysteine(in) = L-cysteine(out). In terms of biological role, exporter of O-acetylserine (OAS) and cysteine. The protein is Cysteine/O-acetylserine efflux protein (eamB) of Klebsiella pneumoniae subsp. pneumoniae (strain ATCC 700721 / MGH 78578).